The primary structure comprises 1305 residues: Myosin-IIIb (1305 aa).

Positions 15–281 (WEIIETIGKG…VTHLLDHPFI (267 aa)) constitute a Protein kinase domain. ATP is bound by residues 21–29 (IGKGTYGKV) and lysine 44. Aspartate 144 acts as the Proton acceptor in catalysis. The region spanning 331 to 1046 (CLEDDLVNLE…HVEQLNLLLR (716 aa)) is the Myosin motor domain. The tract at residues 927–949 (LMDLLSKMVVGQPHFIRCIKPND) is actin-binding. 2 IQ domains span residues 1048–1077 (VMGR…KREK) and 1075–1104 (REKG…RRSE). Disordered stretches follow at residues 1093-1164 (RKLK…VTSG) and 1200-1233 (SPCE…MLSS).

In the C-terminal section; belongs to the TRAFAC class myosin-kinesin ATPase superfamily. Myosin family. The protein in the N-terminal section; belongs to the protein kinase superfamily. STE Ser/Thr protein kinase family. Interacts (via C-terminus) with ESPN. Interacts (via C-terminus) with ESPNL. Expressed in the cochlear hair cells (at protein level). Expressed in utricle hair bundles (at protein level).

It localises to the cytoplasm. The protein resides in the cytoskeleton. It is found in the cell projection. The protein localises to the stereocilium. The catalysed reaction is L-seryl-[protein] + ATP = O-phospho-L-seryl-[protein] + ADP + H(+). The enzyme catalyses L-threonyl-[protein] + ATP = O-phospho-L-threonyl-[protein] + ADP + H(+). Its function is as follows. Probable actin-based motor with a protein kinase activity. Required for normal cochlear hair bundle development and hearing. Plays an important role in the early steps of cochlear hair bundle morphogenesis. Influences the number and lengths of stereocilia to be produced and limits the growth of microvilli within the forming auditory hair bundles thereby contributing to the architecture of the hair bundle, including its staircase pattern. Involved in the elongation of actin in stereocilia tips by transporting the actin regulatory factor ESPN to the plus ends of actin filaments. This Mus musculus (Mouse) protein is Myosin-IIIb (Myo3b).